Consider the following 941-residue polypeptide: Probable respiratory burst oxidase homolog protein I (941 aa).

Residues 1-374 (MSMSFSGGTH…LYSLQDNWKR (374 aa)) are Cytoplasmic-facing. Disordered stretches follow at residues 29 to 48 (PSLPATYSPSPSSSSSSGEE) and 103 to 166 (ERLT…SGTE). Residues 36–45 (SPSPSSSSSS) are compositionally biased toward low complexity. Positions 103-117 (ERLTAGTNSKQQIQK) are enriched in polar residues. EF-hand-like regions lie at residues 196-204 (SKDGYLFKS) and 232-243 (RRIMVDKINLQE). One can recognise an EF-hand domain in the interval 254–289 (ESFDSRLQIFFNMVKNGDGRITENEVKEIIILSASA). Ca(2+) is bound by residues Asn269, Asp271, Arg273, and Glu278. Phosphoserine occurs at positions 346 and 350. Residues 375–395 (IWVLTLWFVIMAWLFMWKCYQ) traverse the membrane as a helical segment. The Extracellular segment spans residues 396–407 (YKHKDAFHVMGY). The chain crosses the membrane as a helical span at residues 408-428 (CLVMAKGAAETLKFNMALILL). A Ferric oxidoreductase domain is found at 413–570 (KGAAETLKFN…LLLTVYVLLV (158 aa)). Residues 429-514 (PVCRNTITYL…YFGLVNTPVG (86 aa)) are Cytoplasmic-facing. The helical transmembrane segment at 515–535 (ITGIIMVAFMLIAFTLASRRC) threads the bilayer. Residues 536-557 (RRNLTKLPKPFDKLTGYNAFWY) lie on the Extracellular side of the membrane. The helical transmembrane segment at 558 to 578 (SHHLLLTVYVLLVIHGVSLYL) threads the bilayer. Residues 579 to 586 (EHKWYRKT) lie on the Cytoplasmic side of the membrane. Residues 587-604 (VWMYLAVPVLLYVGERIF) traverse the membrane as a helical segment. Topologically, residues 605-731 (RFFRSRLYTV…PYGAPAQDHW (127 aa)) are extracellular. The region spanning 609–729 (SRLYTVEICK…DGPYGAPAQD (121 aa)) is the FAD-binding FR-type domain. A helical transmembrane segment spans residues 732–752 (KYDVVLLVGLGIGATPFVSIL). The Cytoplasmic segment spans residues 753–941 (RDLLNNIIKQ…TRFDFHKEQF (189 aa)).

Belongs to the RBOH (TC 5.B.1.3) family. Monomer and homodimer.

It localises to the membrane. Its function is as follows. Calcium-dependent NADPH oxidase that generates superoxide. The polypeptide is Probable respiratory burst oxidase homolog protein I (RBOHI) (Arabidopsis thaliana (Mouse-ear cress)).